The chain runs to 501 residues: Raftlin-2 (501 aa).

Disordered regions lie at residues 1–20 (MGCG…GKIF) and 196–239 (SWNE…RKGE). Gly2 carries the N-myristoyl glycine lipid modification. Cys3 is lipidated: S-palmitoyl cysteine. The segment covering 220 to 233 (GQYQMEQNGSPTSS) has biased composition (polar residues). Ser405 is modified (phosphoserine). The segment at 407–449 (AQTPDKKASRHIKGEDKNKATSRSIGLDTTSSQPAESRHLPEE) is disordered. Position 409 is a phosphothreonine (Thr409). The segment covering 410-425 (PDKKASRHIKGEDKNK) has biased composition (basic and acidic residues). The segment covering 427–441 (TSRSIGLDTTSSQPA) has biased composition (polar residues). Ser430 bears the Phosphoserine mark.

The protein belongs to the raftlin family.

It localises to the cell membrane. Functionally, upon bacterial lipopolysaccharide stimulation, mediates clathrin-dependent internalization of TLR4 in dendritic cells, resulting in activation of TICAM1-mediated signaling and subsequent IFNB1 production. May regulate B-cell antigen receptor-mediated signaling. The polypeptide is Raftlin-2 (RFTN2) (Homo sapiens (Human)).